The following is a 571-amino-acid chain: La-related protein 7 (571 aa).

An N-acetylmethionine modification is found at Met-1. Positions Met-1–Lys-17 are enriched in basic and acidic residues. Disordered regions lie at residues Met-1 to Arg-25 and Leu-181 to Lys-366. The HTH La-type RNA-binding domain occupies Arg-23–Glu-117. The RRM domain maps to Arg-120 to Thr-198. Residues Lys-214–Ile-223 are compositionally biased toward basic residues. Lys-232 participates in a covalent cross-link: Glycyl lysine isopeptide (Lys-Gly) (interchain with G-Cter in SUMO2). At Thr-252 the chain carries Phosphothreonine. Phosphoserine is present on residues Ser-254 and Ser-257. A Phosphothreonine modification is found at Thr-261. Residues Lys-287–Ala-296 show a composition bias toward basic and acidic residues. Phosphoserine is present on residues Ser-294, Ser-295, and Ser-335. At Thr-336 the chain carries Phosphothreonine. A compositionally biased stretch (basic and acidic residues) spans Pro-342–Ser-351. A Phosphoserine modification is found at Ser-349. A compositionally biased stretch (basic residues) spans Lys-352 to His-365. Lys-408 participates in a covalent cross-link: Glycyl lysine isopeptide (Lys-Gly) (interchain with G-Cter in SUMO2). The disordered stretch occupies residues Ser-411–Lys-432. The span at Ser-423–Lys-432 shows a compositional bias: polar residues. In terms of domain architecture, xRRM spans Gln-439–Lys-552.

The protein belongs to the LARP7 family. In terms of assembly, core component of the 7SK RNP complex, at least composed of 7SK RNA, LARP7, MEPCE, HEXIM1 (or HEXIM2) and P-TEFb (composed of CDK9 and CCNT1/cyclin-T1). Interacts with METTL16. Interacts with RBM7; upon genotoxic stress this interaction is enhanced, triggering the release of inactive P-TEFb complex from the core, yielding to P-TEFb complex activation. Associates with box C/D small nucleolar ribonucleoprotein (snoRNP) complexes.

The protein resides in the nucleus. It localises to the nucleoplasm. Its function is as follows. RNA-binding protein that specifically binds distinct small nuclear RNA (snRNAs) and regulates their processing and function. Specifically binds the 7SK snRNA (7SK RNA) and acts as a core component of the 7SK ribonucleoprotein (RNP) complex, thereby acting as a negative regulator of transcription elongation by RNA polymerase II. The 7SK RNP complex sequesters the positive transcription elongation factor b (P-TEFb) in a large inactive 7SK RNP complex preventing RNA polymerase II phosphorylation and subsequent transcriptional elongation. The 7SK RNP complex also promotes snRNA gene transcription by RNA polymerase II via interaction with the little elongation complex (LEC). LARP7 specifically binds to the highly conserved 3'-terminal U-rich stretch of 7SK RNA; on stimulation, remains associated with 7SK RNA, whereas P-TEFb is released from the complex. LARP7 also acts as a regulator of mRNA splicing fidelity by promoting U6 snRNA processing. Specifically binds U6 snRNAs and associates with a subset of box C/D RNP complexes: promotes U6 snRNA 2'-O-methylation by facilitating U6 snRNA loading into box C/D RNP complexes. U6 snRNA 2'-O-methylation is required for mRNA splicing fidelity. Binds U6 snRNAs with a 5'-CAGGG-3' sequence motif. U6 snRNA processing is required for spermatogenesis. This chain is La-related protein 7, found in Rattus norvegicus (Rat).